The primary structure comprises 100 residues: Carboxysome shell vertex protein CcmL (100 aa).

The BMV domain maps to 1–83; it reads MQIGRVRGTV…VDAVVIGIID (83 aa).

The protein belongs to the CcmL/EutN family. CcmL subfamily. As to quaternary structure, homopentamer. Interacts with full-length CcmM.

Its subcellular location is the carboxysome. Functionally, probably forms vertices in the carboxysome, a polyhedral inclusion where RuBisCO (ribulose bisphosphate carboxylase, rbcL-rbcS) is sequestered. Has been modeled to induce curvature upon insertion into an otherwise flat hexagonal molecular layer of CcmK subunits. This chain is Carboxysome shell vertex protein CcmL, found in Gloeobacter violaceus (strain ATCC 29082 / PCC 7421).